A 266-amino-acid chain; its full sequence is Beta-lactamase OXA-19 (266 aa).

The first 20 residues, 1–20 (MKTFAAYVITACLSSTALAS), serve as a signal peptide directing secretion. Residue Ser-67 is the Acyl-ester intermediate of the active site. Lys-70 carries the post-translational modification N6-carboxylysine. Residue 205–207 (KTG) coordinates substrate.

This sequence belongs to the class-D beta-lactamase family.

It catalyses the reaction a beta-lactam + H2O = a substituted beta-amino acid. The chain is Beta-lactamase OXA-19 (bla) from Pseudomonas aeruginosa.